The primary structure comprises 92 residues: Small ribosomal subunit protein uS19 (92 aa).

It belongs to the universal ribosomal protein uS19 family.

Protein S19 forms a complex with S13 that binds strongly to the 16S ribosomal RNA. The sequence is that of Small ribosomal subunit protein uS19 from Thermobifida fusca (strain YX).